A 217-amino-acid chain; its full sequence is Adenylate kinase (217 aa).

10–15 (GAGKGT) is an ATP binding site. Residues 30-59 (STGDMFRAAMKEGTPLGLQAKEYIDRGDLV) are NMP. AMP contacts are provided by residues T31, R36, 57-59 (DLV), 85-88 (GFPR), and Q92. Residues 126-163 (GRRICRNCGATYHLVFHPPAQPGVCDKCGGELYQRPDD) are LID. R127 is an ATP binding site. Zn(2+) contacts are provided by C130 and C133. 136-137 (TY) contributes to the ATP binding site. Residues C150 and C153 each contribute to the Zn(2+) site. R160 and R171 together coordinate AMP. Q199 lines the ATP pocket.

It belongs to the adenylate kinase family. In terms of assembly, monomer.

It is found in the cytoplasm. The enzyme catalyses AMP + ATP = 2 ADP. It functions in the pathway purine metabolism; AMP biosynthesis via salvage pathway; AMP from ADP: step 1/1. In terms of biological role, catalyzes the reversible transfer of the terminal phosphate group between ATP and AMP. Plays an important role in cellular energy homeostasis and in adenine nucleotide metabolism. The protein is Adenylate kinase of Geobacillus thermodenitrificans (strain NG80-2).